We begin with the raw amino-acid sequence, 176 residues long: Inorganic pyrophosphatase (176 aa).

Substrate is bound by residues K31, R45, and Y57. Mg(2+) contacts are provided by D67, D72, and D104. Y141 contacts substrate.

It belongs to the PPase family. As to quaternary structure, homohexamer. The cofactor is Mg(2+).

Its subcellular location is the cytoplasm. The enzyme catalyses diphosphate + H2O = 2 phosphate + H(+). Functionally, catalyzes the hydrolysis of inorganic pyrophosphate (PPi) forming two phosphate ions. This Methanopyrus kandleri (strain AV19 / DSM 6324 / JCM 9639 / NBRC 100938) protein is Inorganic pyrophosphatase.